We begin with the raw amino-acid sequence, 472 residues long: MNMPQSLGTQPLPPEPPSLGTPIEGSGAIAPTEHCWPVRPTLRNELDTFSVHFYIFFGPSVALPPERPAVFALRLLPVLDSGGVLSLELQLNASSLRQENVTVFGCLTHEVPLSLGDAAVTCSKESLAGFLLSVSATSRVARLRIPFPQTGTWFLTLRSLCGVGPRFVRCRNATAEVRLRTFLSPCVDDCGPYGQCKLLRTHNYLYAACECKAGWRGWGCTDSADALTYGFQLLSTLLLCLSNLMFLPPVVLAIRSRYVLEAAVYTFTMFFSTFYHACDQPGIVVFCIMDYDVLQFCDFLGSLMSVWVTVIAMARLQPVIKQVLYLLGAMLLSMALQLDRHGLWNLLGPSLFALGILATAWTVRSVRRRHCYPPTWRRWLFYLCPGSLIAGSAVLLYAFVETRDNYFYIHSIWHMLIAGSVGFLLPPRAKTDRRVPSGARARGCGYQLCINEQEELGLVGPGGTTVSSICVS.

A compositionally biased stretch (low complexity) spans 1–10 (MNMPQSLGTQ). A disordered region spans residues 1-24 (MNMPQSLGTQPLPPEPPSLGTPIE). Residues 1-233 (MNMPQSLGTQ…ADALTYGFQL (233 aa)) are Extracellular-facing. Residue N100 is glycosylated (N-linked (GlcNAc...) asparagine). Residues 182–221 (FLSPCVDDCGPYGQCKLLRTHNYLYAACECKAGWRGWGCT) form the EGF-like domain. 3 cysteine pairs are disulfide-bonded: C186/C196, C190/C209, and C211/C220. Residues 234 to 254 (LSTLLLCLSNLMFLPPVVLAI) traverse the membrane as a helical segment. Residues 255 to 257 (RSR) are Cytoplasmic-facing. Residues 258-277 (YVLEAAVYTFTMFFSTFYHA) form a helical membrane-spanning segment. The Extracellular portion of the chain corresponds to 278–292 (CDQPGIVVFCIMDYD). The chain crosses the membrane as a helical span at residues 293 to 313 (VLQFCDFLGSLMSVWVTVIAM). Residues 314–315 (AR) lie on the Cytoplasmic side of the membrane. The chain crosses the membrane as a helical span at residues 316–336 (LQPVIKQVLYLLGAMLLSMAL). Residues 337-342 (QLDRHG) lie on the Extracellular side of the membrane. A helical transmembrane segment spans residues 343–363 (LWNLLGPSLFALGILATAWTV). The Cytoplasmic portion of the chain corresponds to 364–379 (RSVRRRHCYPPTWRRW). The chain crosses the membrane as a helical span at residues 380-400 (LFYLCPGSLIAGSAVLLYAFV). Residues 401-405 (ETRDN) are Extracellular-facing. A helical transmembrane segment spans residues 406-426 (YFYIHSIWHMLIAGSVGFLLP). Residues 427-472 (PRAKTDRRVPSGARARGCGYQLCINEQEELGLVGPGGTTVSSICVS) lie on the Cytoplasmic side of the membrane.

Belongs to the TMEM8 family. May interact with EZR. In terms of processing, N-glycosylated.

It localises to the cell membrane. The protein resides in the cytoplasm. The protein localises to the nucleus. Its subcellular location is the mitochondrion. It is found in the endoplasmic reticulum. Its function is as follows. May function as a regulator of the EGFR pathway. Probable tumor suppressor which may function in cell growth, proliferation and adhesion. In Mus musculus (Mouse), this protein is Transmembrane protein 8B (Tmem8b).